The following is a 208-amino-acid chain: Protein GrpE (208 aa).

A compositionally biased stretch (basic and acidic residues) spans M1 to T12. Residues M1–N51 form a disordered region. The segment covering E13 to Q23 has biased composition (polar residues). Over residues E42 to N51 the composition is skewed to acidic residues.

Belongs to the GrpE family. As to quaternary structure, homodimer.

The protein resides in the cytoplasm. Participates actively in the response to hyperosmotic and heat shock by preventing the aggregation of stress-denatured proteins, in association with DnaK and GrpE. It is the nucleotide exchange factor for DnaK and may function as a thermosensor. Unfolded proteins bind initially to DnaJ; upon interaction with the DnaJ-bound protein, DnaK hydrolyzes its bound ATP, resulting in the formation of a stable complex. GrpE releases ADP from DnaK; ATP binding to DnaK triggers the release of the substrate protein, thus completing the reaction cycle. Several rounds of ATP-dependent interactions between DnaJ, DnaK and GrpE are required for fully efficient folding. This chain is Protein GrpE, found in Staphylococcus aureus (strain USA300).